The chain runs to 99 residues: Malonate decarboxylase acyl carrier protein (99 aa).

Residue S25 is modified to O-(phosphoribosyl dephospho-coenzyme A)serine.

The protein belongs to the MdcC family. Post-translationally, covalently binds the prosthetic group of malonate decarboxylase.

The protein localises to the cytoplasm. In terms of biological role, subunit of malonate decarboxylase, it is an acyl carrier protein to which acetyl and malonyl thioester residues are bound via a 2'-(5''-phosphoribosyl)-3'-dephospho-CoA prosthetic group and turn over during the catalytic mechanism. This chain is Malonate decarboxylase acyl carrier protein, found in Pseudomonas savastanoi pv. phaseolicola (strain 1448A / Race 6) (Pseudomonas syringae pv. phaseolicola (strain 1448A / Race 6)).